The primary structure comprises 127 residues: Glycine cleavage system H protein (127 aa).

In terms of domain architecture, Lipoyl-binding spans 22–104; sequence KVRIGITHFA…YEKAWMIVVE (83 aa). The residue at position 63 (K63) is an N6-lipoyllysine.

The protein belongs to the GcvH family. The glycine cleavage system is composed of four proteins: P, T, L and H. Requires (R)-lipoate as cofactor.

Functionally, the glycine cleavage system catalyzes the degradation of glycine. The H protein shuttles the methylamine group of glycine from the P protein to the T protein. In terms of biological role, is also involved in protein lipoylation via its role as an octanoyl/lipoyl carrier protein intermediate. This is Glycine cleavage system H protein from Bacillus pumilus (strain SAFR-032).